A 55-amino-acid polypeptide reads, in one-letter code: uncharacterized protein (55 aa).

Residues serine 27–phenylalanine 44 traverse the membrane as a helical segment.

Its subcellular location is the membrane. This is an uncharacterized protein from Dictyostelium discoideum (Social amoeba).